The primary structure comprises 286 residues: Putative short-chain type dehydrogenase/reductase Rv0148 (286 aa).

Position 11 to 35 (11 to 35) interacts with NAD(+); it reads VTGAGGGLGREYALTLAGEGASVVV. S151 contacts substrate. The Proton acceptor role is filled by Y164. Residue K280 forms an Isoglutamyl lysine isopeptide (Lys-Gln) (interchain with Q-Cter in protein Pup) linkage.

It belongs to the short-chain dehydrogenases/reductases (SDR) family. Post-translationally, pupylated at Lys-280 by the prokaryotic ubiquitin-like protein Pup, which probably leads to its degradation by the proteasome.

This Mycobacterium tuberculosis (strain ATCC 25618 / H37Rv) protein is Putative short-chain type dehydrogenase/reductase Rv0148.